Consider the following 274-residue polypeptide: Undecaprenyl-diphosphatase (274 aa).

The next 7 helical transmembrane spans lie at 4 to 24 (ILLL…FLPI), 46 to 63 (LFEI…VWEY), 82 to 102 (KFIL…LAFG), 109 to 129 (LFNP…ILWA), 184 to 204 (ATEF…FYQL), 218 to 238 (MWAV…RWLL), and 249 to 269 (FAWY…FGWV).

It belongs to the UppP family.

The protein localises to the cell inner membrane. The catalysed reaction is di-trans,octa-cis-undecaprenyl diphosphate + H2O = di-trans,octa-cis-undecaprenyl phosphate + phosphate + H(+). Functionally, catalyzes the dephosphorylation of undecaprenyl diphosphate (UPP). Confers resistance to bacitracin. This is Undecaprenyl-diphosphatase from Dechloromonas aromatica (strain RCB).